Reading from the N-terminus, the 535-residue chain is Probable bifunctional tRNA threonylcarbamoyladenosine biosynthesis protein (535 aa).

A kae1 region spans residues 1–323; it reads MICLGLEGTA…YRTDMVEVNW (323 aa). 3 residues coordinate Fe cation: histidine 106, histidine 110, and tyrosine 127. L-threonylcarbamoyladenylate-binding positions include 127 to 131, aspartate 159, glycine 172, glutamate 176, and asparagine 256; that span reads YVSGG. A Fe cation-binding site is contributed by aspartate 284. Positions 333–535 constitute a Protein kinase domain; it reads KIPEHLIGKG…DVERRARYVE (203 aa). ATP-binding positions include 339–347 and lysine 360; that span reads IGKGAEADI. The active-site Proton acceptor; for kinase activity is aspartate 451.

It in the N-terminal section; belongs to the KAE1 / TsaD family. In the C-terminal section; belongs to the protein kinase superfamily. Tyr protein kinase family. BUD32 subfamily. As to quaternary structure, component of the KEOPS complex that consists of Kae1, Bud32, Cgi121 and Pcc1; the whole complex dimerizes. The cofactor is Fe(2+).

The protein localises to the cytoplasm. It carries out the reaction L-seryl-[protein] + ATP = O-phospho-L-seryl-[protein] + ADP + H(+). The catalysed reaction is L-threonyl-[protein] + ATP = O-phospho-L-threonyl-[protein] + ADP + H(+). The enzyme catalyses L-threonylcarbamoyladenylate + adenosine(37) in tRNA = N(6)-L-threonylcarbamoyladenosine(37) in tRNA + AMP + H(+). Activity provided by the Kae1 region seems to be regulated via phosphorylation by the protein kinase Bud32, which is itself activated by Cgi121. Required for the formation of a threonylcarbamoyl group on adenosine at position 37 (t(6)A37) in tRNAs that read codons beginning with adenine. Is a component of the KEOPS complex that is probably involved in the transfer of the threonylcarbamoyl moiety of threonylcarbamoyl-AMP (TC-AMP) to the N6 group of A37. The Kae1 domain likely plays a direct catalytic role in this reaction. The Bud32 domain probably displays kinase activity that regulates Kae1 function. In vitro, exhibits low ATPase activity, but does not bind DNA and does not have endonuclease activity. The sequence is that of Probable bifunctional tRNA threonylcarbamoyladenosine biosynthesis protein from Methanocaldococcus jannaschii (strain ATCC 43067 / DSM 2661 / JAL-1 / JCM 10045 / NBRC 100440) (Methanococcus jannaschii).